The chain runs to 441 residues: MVPPKLHVLFCLCGCLAVVYPFDWQYINPVAHMKSSAWVNKIQVLMAAASFGQTKIPRGNGPYSVGCTDLMFDHTNKGTFLRLYYPSQDNDRLDTLWIPNKEYFWGLSKFLGTHWLMGNILRLLFGSMTTPANWNSPLRPGEKYPLVVFSHGLGAFRTLYSAIGIDLASHGFIVAAVEHRDRSASATYYFKDQSAAEIGDKSWLYLRTLKQEEETHIRNEQVRQRAKECSQALSLILDIDHGKPVKNALDLKFDMEQLKDSIDREKIAVIGHSFGGATVIQTLSEDQRFRCGIALDAWMFPLGDEVYSRIPQPLFFINSEYFQYPANIIKMKKCYSPDKERKMITIRGSVHQNFADFTFATGKIIGHMLKLKGDIDSNVAIDLSNKASLAFLQKHLGLHKDFDQWDCLIEGDDENLIPGTNINTTNQHIMLQNSSGIEKYN.

The N-terminal stretch at Met1–Pro21 is a signal peptide. Ser273 functions as the Nucleophile in the catalytic mechanism. Catalysis depends on charge relay system residues Asp296 and His351. N-linked (GlcNAc...) asparagine glycosylation is found at Asn423 and Asn433.

This sequence belongs to the AB hydrolase superfamily. Lipase family. In terms of processing, N-glycosylated. Macrophage-derived PLA2G7 carries sialylated complex-type N-glycans that hinder its binding to HDL particles. As to expression, plasma. Secreted by macrophages (at protein level).

It is found in the secreted. The protein resides in the extracellular space. The enzyme catalyses a 1-O-alkyl-2-acetyl-sn-glycero-3-phosphocholine + H2O = a 1-O-alkyl-sn-glycero-3-phosphocholine + acetate + H(+). The catalysed reaction is 1-O-decyl-2-acetyl-sn-glycero-3-phosphocholine + H2O = 1-O-decyl-sn-glycero-3-phosphocholine + acetate + H(+). It carries out the reaction 1-O-dodecyl-2-acetyl-sn-glycero-3-phosphocholine + H2O = 1-O-dodecyl-sn-glycero-3-phosphocholine + acetate + H(+). It catalyses the reaction 1-O-tetradecyl-2-acetyl-sn-glycero-3-phosphocholine + H2O = 1-O-tetradecyl-sn-glycero-3-phosphocholine + acetate + H(+). The enzyme catalyses 1-O-hexadecyl-2-acetyl-sn-glycero-3-phosphocholine + H2O = 1-O-hexadecyl-sn-glycero-3-phosphocholine + acetate + H(+). The catalysed reaction is 1-O-octadecyl-2-acetyl-sn-glycero-3-phosphocholine + H2O = 1-O-octadecyl-sn-glycero-3-phosphocholine + acetate + H(+). It carries out the reaction 1-hexadecanoyl-2-acetyl-sn-glycero-3-phosphocholine + H2O = 1-hexadecanoyl-sn-glycero-3-phosphocholine + acetate + H(+). It catalyses the reaction 1-hexadecanoyl-2-propionyl-sn-glycero-3-phosphocholine + H2O = propanoate + 1-hexadecanoyl-sn-glycero-3-phosphocholine + H(+). The enzyme catalyses 1-hexadecanoyl-2-butanoyl-sn-glycero-3-phosphocholine + H2O = butanoate + 1-hexadecanoyl-sn-glycero-3-phosphocholine + H(+). The catalysed reaction is 1-hexadecanoyl-2-pentanoyl-sn-glycero-3-phosphocholine + H2O = pentanoate + 1-hexadecanoyl-sn-glycero-3-phosphocholine + H(+). It carries out the reaction 1-hexadecanoyl-2-glutaroyl-sn-glycero-3-phosphocholine + H2O = glutarate + 1-hexadecanoyl-sn-glycero-3-phosphocholine + H(+). It catalyses the reaction 1-hexadecanoyl-2-(5-oxopentanoyl)-sn-glycero-3-phosphocholine + H2O = 5-oxopentanoate + 1-hexadecanoyl-sn-glycero-3-phosphocholine + H(+). The enzyme catalyses 1-hexadecanoyl-2-(9-oxononanoyl)-sn-glycero-3-phosphocholine + H2O = 9-oxononanoate + 1-hexadecanoyl-sn-glycero-3-phosphocholine + H(+). The catalysed reaction is 1-hexadecanoyl-2-[9-hydroperoxy-(10E-octadecenoyl)]-sn-glycero-3-phosphocholine + H2O = 9-hydroperoxy-10E-octadecenoate + 1-hexadecanoyl-sn-glycero-3-phosphocholine + H(+). It carries out the reaction 1-hexadecanoyl-2-(10-hydroperoxy-8E-octadecenoyl)-sn-glycero-3-phosphocholine + H2O = 10-hydroperoxy-(8E)-octadecenoate + 1-hexadecanoyl-sn-glycero-3-phosphocholine + H(+). Lipoprotein-associated calcium-independent phospholipase A2 involved in phospholipid catabolism during inflammatory and oxidative stress response. At the lipid-aqueous interface, hydrolyzes the ester bond of fatty acyl group attached at sn-2 position of phospholipids (phospholipase A2 activity). Specifically targets phospholipids with a short-chain fatty acyl group at sn-2 position. Can hydrolyze phospholipids with long fatty acyl chains, only if they carry oxidized functional groups. Hydrolyzes and inactivates platelet-activating factor (PAF, 1-O-alkyl-2-acetyl-sn-glycero-3-phosphocholine), a potent pro-inflammatory signaling lipid that acts through PTAFR on various innate immune cells. Hydrolyzes oxidatively truncated phospholipids carrying an aldehyde group at omega position, preventing their accumulation in low-density lipoprotein (LDL) particles and uncontrolled pro-inflammatory effects. As part of high-density lipoprotein (HDL) particles, can hydrolyze phospholipids having long-chain fatty acyl hydroperoxides at sn-2 position and protect against potential accumulation of these oxylipins in the vascular wall. Catalyzes the release from membrane phospholipids of F2-isoprostanes, lipid biomarkers of cellular oxidative damage. This Homo sapiens (Human) protein is Platelet-activating factor acetylhydrolase (PLA2G7).